The sequence spans 227 residues: Cytochrome c oxidase subunit 2 (227 aa).

At 1–14 (MAYPFELGFQDATS) the chain is on the mitochondrial intermembrane side. A helical transmembrane segment spans residues 15-45 (PIMEELLHFHDHTLMIVFLISSLVLYIISLM). The Mitochondrial matrix portion of the chain corresponds to 46–59 (LTTKLTHTSTMDAQ). Residues 60-87 (EIETIWTILPAIILILIALPSLRILYMM) form a helical membrane-spanning segment. Residues 88–227 (DEINDPSLTV…HFENWSSSML (140 aa)) are Mitochondrial intermembrane-facing. Positions 161, 196, 198, 200, 204, and 207 each coordinate Cu cation. Glu-198 serves as a coordination point for Mg(2+).

The protein belongs to the cytochrome c oxidase subunit 2 family. As to quaternary structure, component of the cytochrome c oxidase (complex IV, CIV), a multisubunit enzyme composed of 14 subunits. The complex is composed of a catalytic core of 3 subunits MT-CO1, MT-CO2 and MT-CO3, encoded in the mitochondrial DNA, and 11 supernumerary subunits COX4I, COX5A, COX5B, COX6A, COX6B, COX6C, COX7A, COX7B, COX7C, COX8 and NDUFA4, which are encoded in the nuclear genome. The complex exists as a monomer or a dimer and forms supercomplexes (SCs) in the inner mitochondrial membrane with NADH-ubiquinone oxidoreductase (complex I, CI) and ubiquinol-cytochrome c oxidoreductase (cytochrome b-c1 complex, complex III, CIII), resulting in different assemblies (supercomplex SCI(1)III(2)IV(1) and megacomplex MCI(2)III(2)IV(2)). Found in a complex with TMEM177, COA6, COX18, COX20, SCO1 and SCO2. Interacts with TMEM177 in a COX20-dependent manner. Interacts with COX20. Interacts with COX16. Cu cation is required as a cofactor.

It is found in the mitochondrion inner membrane. The enzyme catalyses 4 Fe(II)-[cytochrome c] + O2 + 8 H(+)(in) = 4 Fe(III)-[cytochrome c] + 2 H2O + 4 H(+)(out). Component of the cytochrome c oxidase, the last enzyme in the mitochondrial electron transport chain which drives oxidative phosphorylation. The respiratory chain contains 3 multisubunit complexes succinate dehydrogenase (complex II, CII), ubiquinol-cytochrome c oxidoreductase (cytochrome b-c1 complex, complex III, CIII) and cytochrome c oxidase (complex IV, CIV), that cooperate to transfer electrons derived from NADH and succinate to molecular oxygen, creating an electrochemical gradient over the inner membrane that drives transmembrane transport and the ATP synthase. Cytochrome c oxidase is the component of the respiratory chain that catalyzes the reduction of oxygen to water. Electrons originating from reduced cytochrome c in the intermembrane space (IMS) are transferred via the dinuclear copper A center (CU(A)) of subunit 2 and heme A of subunit 1 to the active site in subunit 1, a binuclear center (BNC) formed by heme A3 and copper B (CU(B)). The BNC reduces molecular oxygen to 2 water molecules using 4 electrons from cytochrome c in the IMS and 4 protons from the mitochondrial matrix. The protein is Cytochrome c oxidase subunit 2 (MT-CO2) of Tamias townsendii (Townsend's chipmunk).